Here is a 425-residue protein sequence, read N- to C-terminus: MAEIIDIHAREILDSRGNPTVEVDVLLDSGAFGRAAVPSGASTGAHEAVELRDGDKTRYAGKGVLKAVEAVNGELFSALSGLDATDQLLIDQAMIDLDGTPNKARLGANAILGVSLACAKAAAEEAELPLYRYIGGARSHILPVPMMNIINGGQHADNPIDVQEFMIMPVSAPTVADAVRMGAEVFHALKKKLKDAGHNTNVGDEGGFAPNLASADEALAFIVKAIEAAGYKAGEDIVLALDAASSEFYKDGKYVLAGEGKTLDAEGMVKYYAELCKRYPILSIEDGCAEDDWAGWSLLTAELGAKVQLVGDDLFVTNPLRLAEGIRKGVANSILVKVNQIGTLSETLEAVEMAHKAGYTSVLSHRSGETEDSTIADIAVATNCGQIKTGSLSRSDRLAKYNQLIRIEEELGPVAVYAGASILRG.

Residue glutamine 163 coordinates (2R)-2-phosphoglycerate. Glutamate 205 serves as the catalytic Proton donor. 3 residues coordinate Mg(2+): aspartate 242, glutamate 285, and aspartate 312. Residues lysine 337, arginine 366, serine 367, and lysine 388 each contribute to the (2R)-2-phosphoglycerate site. Lysine 337 serves as the catalytic Proton acceptor.

Belongs to the enolase family. Requires Mg(2+) as cofactor.

Its subcellular location is the cytoplasm. The protein localises to the secreted. It localises to the cell surface. It carries out the reaction (2R)-2-phosphoglycerate = phosphoenolpyruvate + H2O. Its pathway is carbohydrate degradation; glycolysis; pyruvate from D-glyceraldehyde 3-phosphate: step 4/5. Catalyzes the reversible conversion of 2-phosphoglycerate (2-PG) into phosphoenolpyruvate (PEP). It is essential for the degradation of carbohydrates via glycolysis. The sequence is that of Enolase from Rhodospirillum rubrum (strain ATCC 11170 / ATH 1.1.1 / DSM 467 / LMG 4362 / NCIMB 8255 / S1).